A 589-amino-acid polypeptide reads, in one-letter code: Putative phospholipase B-like 2 (589 aa).

The N-terminal stretch at 1–41 (MVGQMYCYPGSHLARALTRALALALVLALLVGPFLSGLAGA) is a signal peptide. N-linked (GlcNAc...) asparagine glycans are attached at residues Asn-88 and Asn-110. An intrachain disulfide couples Cys-142 to Cys-152. N-linked (GlcNAc...) asparagine glycosylation is found at Asn-231, Asn-436, and Asn-465. Cysteines 492 and 495 form a disulfide. Asn-515 carries N-linked (GlcNAc...) asparagine glycosylation.

It belongs to the phospholipase B-like family. As to quaternary structure, interacts with IGF2R. The p76 protein is synthesized as a 80 kDa precursor which is then processed into a N-terminal 32 kDa form and a C-terminal 45 kDa form. In terms of processing, glycosylated; contains mannose 6-phosphate sugars. Ubiquitously expressed, with highest levels in heart, brain and liver.

It is found in the lysosome lumen. Functionally, putative phospholipase. The protein is Putative phospholipase B-like 2 (PLBD2) of Homo sapiens (Human).